The following is a 63-amino-acid chain: MAWKVSVDVDTCIGDAICASLCPDVFEMGDDGKAHPVVETTDLDCAQEAAEACPVGAITLEEA.

The region spanning 3–31 is the 4Fe-4S ferredoxin-type domain; sequence WKVSVDVDTCIGDAICASLCPDVFEMGDD. The [4Fe-4S] cluster site is built by Cys-12, Asp-15, and Cys-18. The cysteines at positions 22 and 45 are disulfide-linked. A [4Fe-4S] cluster-binding site is contributed by Cys-53.

[4Fe-4S] cluster is required as a cofactor. Requires [3Fe-4S] cluster as cofactor.

Functionally, ferredoxins are iron-sulfur proteins that transfer electrons in a wide variety of metabolic reactions. The sequence is that of Ferredoxin (fdxA) from Thermococcus kodakarensis (strain ATCC BAA-918 / JCM 12380 / KOD1) (Pyrococcus kodakaraensis (strain KOD1)).